A 272-amino-acid chain; its full sequence is Imidazole glycerol phosphate synthase subunit HisF (272 aa).

Active-site residues include Asp12 and Asp131.

It belongs to the HisA/HisF family. In terms of assembly, heterodimer of HisH and HisF.

It localises to the cytoplasm. The catalysed reaction is 5-[(5-phospho-1-deoxy-D-ribulos-1-ylimino)methylamino]-1-(5-phospho-beta-D-ribosyl)imidazole-4-carboxamide + L-glutamine = D-erythro-1-(imidazol-4-yl)glycerol 3-phosphate + 5-amino-1-(5-phospho-beta-D-ribosyl)imidazole-4-carboxamide + L-glutamate + H(+). Its pathway is amino-acid biosynthesis; L-histidine biosynthesis; L-histidine from 5-phospho-alpha-D-ribose 1-diphosphate: step 5/9. IGPS catalyzes the conversion of PRFAR and glutamine to IGP, AICAR and glutamate. The HisF subunit catalyzes the cyclization activity that produces IGP and AICAR from PRFAR using the ammonia provided by the HisH subunit. The sequence is that of Imidazole glycerol phosphate synthase subunit HisF from Methanopyrus kandleri (strain AV19 / DSM 6324 / JCM 9639 / NBRC 100938).